A 177-amino-acid polypeptide reads, in one-letter code: Large ribosomal subunit protein eL20 (177 aa).

Belongs to the eukaryotic ribosomal protein eL20 family.

This chain is Large ribosomal subunit protein eL20 (RpL18A), found in Spodoptera frugiperda (Fall armyworm).